The following is a 343-amino-acid chain: L-threonine 3-dehydrogenase (343 aa).

Cys38 contacts Zn(2+). Residues Thr40 and His43 each act as charge relay system in the active site. Residues His63, Glu64, Cys93, Cys96, Cys99, and Cys107 each coordinate Zn(2+). Residues Ile175, Asp195, Arg200, 262 to 264, and 286 to 287 contribute to the NAD(+) site; these read LGI and IY.

It belongs to the zinc-containing alcohol dehydrogenase family. In terms of assembly, homotetramer. It depends on Zn(2+) as a cofactor.

It is found in the cytoplasm. It catalyses the reaction L-threonine + NAD(+) = (2S)-2-amino-3-oxobutanoate + NADH + H(+). It functions in the pathway amino-acid degradation; L-threonine degradation via oxydo-reductase pathway; glycine from L-threonine: step 1/2. Functionally, catalyzes the NAD(+)-dependent oxidation of L-threonine to 2-amino-3-ketobutyrate. The protein is L-threonine 3-dehydrogenase of Paraburkholderia xenovorans (strain LB400).